Consider the following 116-residue polypeptide: Prefoldin subunit beta (116 aa).

The protein belongs to the prefoldin subunit beta family. Heterohexamer of two alpha and four beta subunits.

The protein localises to the cytoplasm. Its function is as follows. Molecular chaperone capable of stabilizing a range of proteins. Seems to fulfill an ATP-independent, HSP70-like function in archaeal de novo protein folding. This Archaeoglobus fulgidus (strain ATCC 49558 / DSM 4304 / JCM 9628 / NBRC 100126 / VC-16) protein is Prefoldin subunit beta (pfdB).